The chain runs to 556 residues: Arginine--tRNA ligase (556 aa).

A 'HIGH' region motif is present at residues 130–140 (ANPTGPIHLGG).

This sequence belongs to the class-I aminoacyl-tRNA synthetase family. Monomer.

It localises to the cytoplasm. The catalysed reaction is tRNA(Arg) + L-arginine + ATP = L-arginyl-tRNA(Arg) + AMP + diphosphate. This Corynebacterium jeikeium (strain K411) protein is Arginine--tRNA ligase.